The primary structure comprises 301 residues: Probable alpha-L-glutamate ligase (301 aa).

The ATP-grasp domain occupies Leu104 to Glu287. ATP is bound by residues Lys141, Glu178 to Phe179, Asp187, and Arg211 to Asn213. 3 residues coordinate Mg(2+): Asp248, Glu260, and Asn262. Mn(2+) contacts are provided by Asp248, Glu260, and Asn262.

Belongs to the RimK family. Mg(2+) is required as a cofactor. It depends on Mn(2+) as a cofactor.

This is Probable alpha-L-glutamate ligase from Hydrogenovibrio crunogenus (strain DSM 25203 / XCL-2) (Thiomicrospira crunogena).